Reading from the N-terminus, the 114-residue chain is RutC family protein YoaB (114 aa).

It belongs to the RutC family.

This Escherichia coli O6:H1 (strain CFT073 / ATCC 700928 / UPEC) protein is RutC family protein YoaB (yoaB).